Consider the following 878-residue polypeptide: Microtubule-associated protein homolog maph-1.1 (878 aa).

Disordered regions lie at residues 224 to 425 and 456 to 518; these read ALSD…AQAT and EIPP…PVVP. Composition is skewed to low complexity over residues 241-268, 278-293, 310-321, and 328-339; these read PSAR…APRA, SRPT…PRTA, APTRAPVPARSA, and APAKPAANTAKA. Composition is skewed to basic and acidic residues over residues 416 to 425 and 480 to 496; these read PPRHEVAQAT and EEDK…KPDP.

It belongs to the MAP1A/MAP1B/MAP1S family. In terms of assembly, interacts with dlg-1.

It localises to the cell projection. Its subcellular location is the dendrite. It is found in the perikaryon. The protein resides in the axon. The protein localises to the cytoplasm. It localises to the cytoskeleton. This chain is Microtubule-associated protein homolog maph-1.1, found in Caenorhabditis elegans.